Reading from the N-terminus, the 364-residue chain is Carbamoyl phosphate synthase pyrimidine-specific small chain (364 aa).

Residues 1-169 (MKRYLVLEDG…AYPNPATGPN (169 aa)) are CPSase. L-glutamine-binding residues include Ser45, Gly217, and Gly219. A Glutamine amidotransferase type-1 domain is found at 169 to 356 (NVVVVDFGLK…IDLMAANQAT (188 aa)). Catalysis depends on Cys244, which acts as the Nucleophile. The L-glutamine site is built by Leu245, Gln248, Asn286, Gly288, and Tyr289. Active-site residues include His329 and Asp331.

This sequence belongs to the CarA family. In terms of assembly, composed of two chains; the small (or glutamine) chain promotes the hydrolysis of glutamine to ammonia, which is used by the large (or ammonia) chain to synthesize carbamoyl phosphate. Tetramer of heterodimers (alpha,beta)4.

The catalysed reaction is hydrogencarbonate + L-glutamine + 2 ATP + H2O = carbamoyl phosphate + L-glutamate + 2 ADP + phosphate + 2 H(+). It carries out the reaction L-glutamine + H2O = L-glutamate + NH4(+). It participates in pyrimidine metabolism; UMP biosynthesis via de novo pathway; (S)-dihydroorotate from bicarbonate: step 1/3. With respect to regulation, inhibited by pyrimidine. Small subunit of the glutamine-dependent carbamoyl phosphate synthetase (CPSase). CPSase catalyzes the formation of carbamoyl phosphate from the ammonia moiety of glutamine, carbonate, and phosphate donated by ATP, constituting the first step of the biosynthetic pathway leading to pyrimidine nucleotides. The small subunit (glutamine amidotransferase) binds and cleaves glutamine to supply the large subunit with the substrate ammonia. The sequence is that of Carbamoyl phosphate synthase pyrimidine-specific small chain from Lactiplantibacillus plantarum (strain ATCC BAA-793 / NCIMB 8826 / WCFS1) (Lactobacillus plantarum).